Reading from the N-terminus, the 60-residue chain is Large ribosomal subunit protein bL32c (60 aa).

Belongs to the bacterial ribosomal protein bL32 family.

Its subcellular location is the plastid. It is found in the chloroplast. This is Large ribosomal subunit protein bL32c from Psilotum nudum (Whisk fern).